The sequence spans 119 residues: Beta-2-microglobulin (119 aa).

An N-terminal signal peptide occupies residues 1 to 20 (MARFVVVALLVLLSLSGLEA). The Ig-like C1-type domain maps to 25–114 (PKIQVYSRHP…VTFSTPKTVK (90 aa)). A disulfide bridge connects residues Cys-45 and Cys-100.

The protein belongs to the beta-2-microglobulin family. As to quaternary structure, heterodimer of an alpha chain and a beta chain. Beta-2-microglobulin is the beta-chain of major histocompatibility complex class I molecules.

The protein resides in the secreted. In terms of biological role, component of the class I major histocompatibility complex (MHC). Involved in the presentation of peptide antigens to the immune system. This is Beta-2-microglobulin (B2M) from Callimico goeldii (Goeldi's marmoset).